Reading from the N-terminus, the 261-residue chain is Thiazole synthase (261 aa).

The Schiff-base intermediate with DXP role is filled by Lys-102. 1-deoxy-D-xylulose 5-phosphate-binding positions include Gly-163, 189–190 (AG), and 211–212 (NT).

This sequence belongs to the ThiG family. As to quaternary structure, homotetramer. Forms heterodimers with either ThiH or ThiS.

It is found in the cytoplasm. It catalyses the reaction [ThiS sulfur-carrier protein]-C-terminal-Gly-aminoethanethioate + 2-iminoacetate + 1-deoxy-D-xylulose 5-phosphate = [ThiS sulfur-carrier protein]-C-terminal Gly-Gly + 2-[(2R,5Z)-2-carboxy-4-methylthiazol-5(2H)-ylidene]ethyl phosphate + 2 H2O + H(+). It functions in the pathway cofactor biosynthesis; thiamine diphosphate biosynthesis. In terms of biological role, catalyzes the rearrangement of 1-deoxy-D-xylulose 5-phosphate (DXP) to produce the thiazole phosphate moiety of thiamine. Sulfur is provided by the thiocarboxylate moiety of the carrier protein ThiS. In vitro, sulfur can be provided by H(2)S. This chain is Thiazole synthase, found in Myxococcus xanthus (strain DK1622).